Here is a 356-residue protein sequence, read N- to C-terminus: Protein MGF 360-10L (356 aa).

One copy of the ANK repeat lies at Asp57–Ile89. The N-linked (GlcNAc...) asparagine; by host glycan is linked to Asn172. The helical transmembrane segment at Asn249–Ile271 threads the bilayer. N-linked (GlcNAc...) asparagine; by host glycans are attached at residues Asn352 and Asn353.

Belongs to the asfivirus MGF 360 family.

The protein resides in the host membrane. Plays a role in virus cell tropism, and may be required for efficient virus replication in macrophages. This is Protein MGF 360-10L from African swine fever virus (isolate Tick/South Africa/Pretoriuskop Pr4/1996) (ASFV).